A 219-amino-acid chain; its full sequence is Glutathione S-transferase 3 (219 aa).

Residues 3-82 form the GST N-terminal domain; it reads DEVVLLDTWA…YIDEVWNDKS (80 aa). Glutathione contacts are provided by residues Ser-13, Ile-54, and 66 to 67; that span reads ES. The GST C-terminal domain maps to 88–216; that stretch reads DPYKRSQARF…GLIVELQKTL (129 aa).

It belongs to the GST superfamily. HSP26 family. As to quaternary structure, homodimer. degradation; (R)-lactate from methylglyoxal: step 1/2.

The catalysed reaction is RX + glutathione = an S-substituted glutathione + a halide anion + H(+). In terms of biological role, conjugation of reduced glutathione to a wide number of exogenous and endogenous hydrophobic electrophiles. Involved in the detoxification of certain herbicides. The protein is Glutathione S-transferase 3 (GST3) of Glycine max (Soybean).